The sequence spans 143 residues: Transcriptional regulator SlyA (143 aa).

The HTH marR-type domain occupies 2–135 (ESTLGSDLSR…LTNLVERLEQ (134 aa)). Residues 49–72 (QIQLAKAIGIEQPSLVRTLDQLED) constitute a DNA-binding region (H-T-H motif).

Belongs to the SlyA family. In terms of assembly, homodimer.

Transcription regulator that can specifically activate or repress expression of target genes. The polypeptide is Transcriptional regulator SlyA (Edwardsiella tarda).